The chain runs to 317 residues: Probable cell division protein WhiA (317 aa).

Residues serine 281–lysine 314 constitute a DNA-binding region (H-T-H motif).

The protein belongs to the WhiA family.

Involved in cell division and chromosome segregation. This Clostridium novyi (strain NT) protein is Probable cell division protein WhiA.